The primary structure comprises 754 residues: MSAEVSTTPAADNVNGTPEATNAAATSAPEVTAVESSSPTSPNNNNQPHSASLYVGELDPSVTEAMLYELFSSIGQVASIRVCRDAVTRRSLGYAYVNYNNTADGERALEDLNYTLIKGKPCRIMWSQRDPALRKTGQGNVFIKNLDSAIDNKALHDTFAAFGNILSCKVAQDEFGNSKGYGFVHYETAEAANNAIKHVNGMLLNDKKVFVGHHISKKDRQSKFDEMKANFTNIYIKNIDPDVTEEEFRKIFEQFGEITSATLSRDPEGKSRGFGFVNYSTHESAQAAVDEMHDKEVKTQKLYVGRAQKKHEREEELRKQYEAARLEKASKYQGVNLYVKNLTDDVDDEKLRELFGPYGTITSAKVMRDSTPAERTETPDSEKEKEVNKENEKKEDEEKAAEEKPKESDEEKKDETKKSDKKLLGKSKGFGFVCFSSPDEASKAVTEMNQRMVNGKPLYVALAQRKDVRRSQLEASIQARNTIRQQQAAAAAGMPQPYMQPAVFYGPGQQGFIPAGQRGGMPFAPQPGMVMGIPGGRPGQYPGPFPGQQGGRGMGPNQQMPPNFQGIPMGAMQGPGGIPNGMGYPQAMGQVQFGRGGGRGQVPGMPMGQGMRGPGYQGRGGPQGGPRPQGGRGQNAAAQPAAGREEAPAGALTAQALNAAAPPQQKQMLGEALYPKIQAQQPELAGKITGMLLEMDNTELLGLLEDDDALRAKVDEALSVYDEYMKNKGEGEAPADADKPKEAAKETATEENKS.

Positions 1-25 (MSAEVSTTPAADNVNGTPEATNAAA) are enriched in polar residues. Residues 1–52 (MSAEVSTTPAADNVNGTPEATNAAATSAPEVTAVESSSPTSPNNNNQPHSAS) are disordered. Residues 36–46 (SSSPTSPNNNN) are compositionally biased toward low complexity. RRM domains are found at residues 51–129 (ASLY…WSQR), 139–216 (GNVF…HHIS), 232–309 (TNIY…RAQK), and 335–465 (VNLY…LAQR). 2 disordered regions span residues 365-420 (KVMR…KKSD) and 595-648 (RGGG…EEAP). The span at 366–420 (VMRDSTPAERTETPDSEKEKEVNKENEKKEDEEKAAEEKPKESDEEKKDETKKSD) shows a compositional bias: basic and acidic residues. Residues 610–633 (GMRGPGYQGRGGPQGGPRPQGGRG) show a composition bias toward gly residues. Over residues 634 to 648 (QNAAAQPAAGREEAP) the composition is skewed to low complexity. A PABC domain is found at 649–726 (AGALTAQALN…ALSVYDEYMK (78 aa)). Positions 729–754 (GEGEAPADADKPKEAAKETATEENKS) are disordered.

Belongs to the polyadenylate-binding protein type-1 family.

The protein resides in the cytoplasm. Its subcellular location is the nucleus. Functionally, binds the poly(A) tail of mRNA. Appears to be an important mediator of the multiple roles of the poly(A) tail in mRNA biogenesis, stability and translation. In the nucleus, involved in both mRNA cleavage and polyadenylation. Is also required for efficient mRNA export to the cytoplasm. Acts in concert with a poly(A)-specific nuclease (PAN) to affect poly(A) tail shortening, which may occur concomitantly with either nucleocytoplasmic mRNA transport or translational initiation. In the cytoplasm, stimulates translation initiation and regulates mRNA decay through translation termination-coupled poly(A) shortening, probably mediated by PAN. The sequence is that of Polyadenylate-binding protein, cytoplasmic and nuclear (pab1) from Aspergillus clavatus (strain ATCC 1007 / CBS 513.65 / DSM 816 / NCTC 3887 / NRRL 1 / QM 1276 / 107).